The sequence spans 326 residues: Guanine nucleotide-binding protein subunit beta-like protein 1 (326 aa).

6 WD repeats span residues 17 to 61, 64 to 104, 159 to 202, 205 to 244, 250 to 291, and 292 to 325; these read GTQS…IVTT, GHGG…NTIM, ARPG…VCSQ, CHEE…SLQV, LTNP…AVLA, and FHSA…LYPC.

As to expression, expressed at low levels in most tissues and highly expressed in adult testis. Widely expressed in adult brain with striking regional distribution in forebrain, midbrain, and hindbrain structures, including the thalamus, hypothalamus, amygdala, hippocampus, pons.

It is found in the cytoplasm. Its subcellular location is the nucleus. Its function is as follows. Acts as a critical regulator of DNA damage response (DDR) signaling via specifically regulating phosphatidylinositol 3-kinase-related protein kinase (PIKK) family proteins. This chain is Guanine nucleotide-binding protein subunit beta-like protein 1 (Gnb1l), found in Mus musculus (Mouse).